The primary structure comprises 400 residues: MKAVRVHILGSGGREHAIGWAFAKQGYEVHFYPGNAGTKRDGTNHPYEGEKTLKAIPEEDIVIPGSEEFLVEGVSNWRSNVFGPVKEVARLEGSKVYAKRFMKKYGIRTARFEVAETPEELREKIKKFSPPYVIKADGLARGKGVLILDSKEETIEKGSKLIIGELIKGVKGPVVIDEFLAGNELSAMAVVNGRNFVILPFVRDYKRLMDGDRGPNTGGMGSWGPVEIPSDTIKKIEELFDKTLWGVEKEGYAYRGFLYLGLMLHDGDPYILEYNVRLGDPETEVIVTLNPEGFVNAVLEGYRGGKMEPVEPRGFAVDVVLAARGYPDAPEKGKEITLPEEGLIFFAGVAEKDGKLVTNGGRVLHCMGTGETKEEARRKAYELAEKVHFEGKTYRRDIAL.

In terms of domain architecture, ATP-grasp spans 99-303 (KRFMKKYGIR…FVNAVLEGYR (205 aa)). 125–186 (IKKFSPPYVI…DEFLAGNELS (62 aa)) lines the ATP pocket. 2 residues coordinate Mg(2+): Glu-273 and Asn-275.

Belongs to the GARS family. Requires Mg(2+) as cofactor. Mn(2+) serves as cofactor.

The enzyme catalyses 5-phospho-beta-D-ribosylamine + glycine + ATP = N(1)-(5-phospho-beta-D-ribosyl)glycinamide + ADP + phosphate + H(+). The protein operates within purine metabolism; IMP biosynthesis via de novo pathway; N(1)-(5-phospho-D-ribosyl)glycinamide from 5-phospho-alpha-D-ribose 1-diphosphate: step 2/2. This Thermotoga maritima (strain ATCC 43589 / DSM 3109 / JCM 10099 / NBRC 100826 / MSB8) protein is Phosphoribosylamine--glycine ligase.